The following is a 295-amino-acid chain: Aspartate carbamoyltransferase catalytic subunit (295 aa).

Arg-49 and Thr-50 together coordinate carbamoyl phosphate. Position 77 (Lys-77) interacts with L-aspartate. Arg-99, His-127, and Gln-130 together coordinate carbamoyl phosphate. Positions 161 and 212 each coordinate L-aspartate. Carbamoyl phosphate-binding residues include Gly-251 and Pro-252.

The protein belongs to the aspartate/ornithine carbamoyltransferase superfamily. ATCase family. Heterododecamer (2C3:3R2) of six catalytic PyrB chains organized as two trimers (C3), and six regulatory PyrI chains organized as three dimers (R2).

It carries out the reaction carbamoyl phosphate + L-aspartate = N-carbamoyl-L-aspartate + phosphate + H(+). It functions in the pathway pyrimidine metabolism; UMP biosynthesis via de novo pathway; (S)-dihydroorotate from bicarbonate: step 2/3. Catalyzes the condensation of carbamoyl phosphate and aspartate to form carbamoyl aspartate and inorganic phosphate, the committed step in the de novo pyrimidine nucleotide biosynthesis pathway. This is Aspartate carbamoyltransferase catalytic subunit from Campylobacter jejuni subsp. jejuni serotype O:23/36 (strain 81-176).